Consider the following 558-residue polypeptide: MPTDIEIARAATLQPISAIAEKIGIPDAALHPHGRHIAKIDHAHIASLEAKPEGKLILVTAISPTPAGEGKTTTTVGLGDALNRIGKKAVICLREPSLGPCFGMKGGAAGGGKSQVVPMEAINLHFTGDFHAITSAHSLAAALIDNHVYWGNELNIDVRRIAWRRVVDMNDRALRSITQSLGGVANGYPREDGFDITVASEVMAVFCLARDLADLEARLGRIVVAETRDRKAVTLADLKATGAMAVLLKDALQPNLVQTLEGSPALIHGGPFANIAHGCNSVIATRTGLRLGEYAVTEAGFGADLGAEKFIDIKCRQTGLSPSAVVIVATLRALKMHGGVEKKALGTENIAALEKGFVNLARHVENVRRFGLPVVVAVNHFHTDTEAELATLKALCRDKLDVEAITCRHWAEGGAGAEELARAVVALAEGGAPKTPNFVYPEDAKLTDKIRTIAQTLYGAADIQVESKAATKLAQFEKDGYGKLPVCMAKTQYSFSTDPNLMGAPSGHVVAVRDVRLSAGAGFVVVICGEIMTMPGLPKVPAAEGIHLDANGQIEGLF.

65–72 (TPAGEGKT) is an ATP binding site.

Belongs to the formate--tetrahydrofolate ligase family.

It catalyses the reaction (6S)-5,6,7,8-tetrahydrofolate + formate + ATP = (6R)-10-formyltetrahydrofolate + ADP + phosphate. It participates in one-carbon metabolism; tetrahydrofolate interconversion. In Methylobacterium nodulans (strain LMG 21967 / CNCM I-2342 / ORS 2060), this protein is Formate--tetrahydrofolate ligase.